An 85-amino-acid polypeptide reads, in one-letter code: Small ribosomal subunit protein bS18 (85 aa).

Belongs to the bacterial ribosomal protein bS18 family. As to quaternary structure, part of the 30S ribosomal subunit. Forms a tight heterodimer with protein bS6.

Functionally, binds as a heterodimer with protein bS6 to the central domain of the 16S rRNA, where it helps stabilize the platform of the 30S subunit. The protein is Small ribosomal subunit protein bS18 of Hyphomonas neptunium (strain ATCC 15444).